The chain runs to 66 residues: Large ribosomal subunit protein bL31 (66 aa).

Positions 16, 18, 36, and 39 each coordinate Zn(2+).

The protein belongs to the bacterial ribosomal protein bL31 family. Type A subfamily. In terms of assembly, part of the 50S ribosomal subunit. Requires Zn(2+) as cofactor.

Functionally, binds the 23S rRNA. This chain is Large ribosomal subunit protein bL31, found in Campylobacter hominis (strain ATCC BAA-381 / DSM 21671 / CCUG 45161 / LMG 19568 / NCTC 13146 / CH001A).